The chain runs to 540 residues: uncharacterized protein (540 aa).

Residues 1-58 (MAVSAFRGTRLPLFHHSQFPVARTVSGTSKKMIGARNFKGFVLTAQYSQTQDLFTSRL) constitute a chloroplast transit peptide. Positions 195–533 (YVDPTPIASA…ISIASNKRTN (339 aa)) constitute a Protein kinase domain. ATP is bound by residues 201-209 (IASASIAQV) and Lys224. The active-site Proton acceptor is Asp362.

The protein belongs to the protein kinase superfamily. ADCK protein kinase family.

It is found in the plastid. The protein localises to the chloroplast. The protein resides in the plastoglobule. This is an uncharacterized protein from Arabidopsis thaliana (Mouse-ear cress).